The chain runs to 214 residues: tRNA (guanine-N(7)-)-methyltransferase (214 aa).

S-adenosyl-L-methionine is bound by residues glutamate 45, glutamate 70, aspartate 97, and aspartate 119. The active site involves aspartate 119. Substrate is bound by residues lysine 123, aspartate 155, and 192-195 (TEYE).

This sequence belongs to the class I-like SAM-binding methyltransferase superfamily. TrmB family.

The catalysed reaction is guanosine(46) in tRNA + S-adenosyl-L-methionine = N(7)-methylguanosine(46) in tRNA + S-adenosyl-L-homocysteine. The protein operates within tRNA modification; N(7)-methylguanine-tRNA biosynthesis. Functionally, catalyzes the formation of N(7)-methylguanine at position 46 (m7G46) in tRNA. This is tRNA (guanine-N(7)-)-methyltransferase from Clostridioides difficile (strain 630) (Peptoclostridium difficile).